The sequence spans 242 residues: Methylthioribulose-1-phosphate dehydratase (242 aa).

A Phosphoserine modification is found at Ser87. Cys97 contributes to the substrate binding site. The Zn(2+) site is built by His115 and His117. Catalysis depends on Glu139, which acts as the Proton donor/acceptor. His195 is a binding site for Zn(2+).

The protein belongs to the aldolase class II family. MtnB subfamily. In terms of assembly, homotetramer. Interacts with APAF1. May interact with CASP1. Zn(2+) is required as a cofactor. As to expression, isoform 1 is ubiquitously expressed. Isoform 2 is expressed at lower levels and detected in heart, brain, pancreas, liver, placenta, skeletal muscle and kidney.

The protein localises to the cytoplasm. It carries out the reaction 5-(methylsulfanyl)-D-ribulose 1-phosphate = 5-methylsulfanyl-2,3-dioxopentyl phosphate + H2O. The protein operates within amino-acid biosynthesis; L-methionine biosynthesis via salvage pathway; L-methionine from S-methyl-5-thio-alpha-D-ribose 1-phosphate: step 2/6. In terms of biological role, catalyzes the dehydration of methylthioribulose-1-phosphate (MTRu-1-P) into 2,3-diketo-5-methylthiopentyl-1-phosphate (DK-MTP-1-P). Functions in the methionine salvage pathway, which plays a key role in cancer, apoptosis, microbial proliferation and inflammation. May inhibit the CASP1-related inflammatory response (pyroptosis), the CASP9-dependent apoptotic pathway and the cytochrome c-dependent and APAF1-mediated cell death. This Homo sapiens (Human) protein is Methylthioribulose-1-phosphate dehydratase.